A 344-amino-acid polypeptide reads, in one-letter code: Transcription factor JunB (344 aa).

Residues lysine 4, lysine 33, and lysine 36 each participate in a glycyl lysine isopeptide (Lys-Gly) (interchain with G-Cter in SUMO2) cross-link. The segment covering 51–65 has biased composition (gly residues); it reads KGPGARGPGPEGSGA. A disordered region spans residues 51 to 75; that stretch reads KGPGARGPGPEGSGAGSYFSGQGSD. Residue lysine 81 forms a Glycyl lysine isopeptide (Lys-Gly) (interchain with G-Cter in SUMO2) linkage. A phosphothreonine mark is found at threonine 102 and threonine 104. Serine 117 carries the post-translational modification Phosphoserine. Residue lysine 138 forms a Glycyl lysine isopeptide (Lys-Gly) (interchain with G-Cter in SUMO2) linkage. Disordered stretches follow at residues 181–202 and 237–257; these read NLSS…VGTG and KEEP…PVSP. Residues 183-192 show a composition bias toward low complexity; the sequence is SSYSPASAPS. An N6-acetyllysine; alternate modification is found at lysine 237. Residue lysine 237 forms a Glycyl lysine isopeptide (Lys-Gly) (interchain with G-Cter in SUMO1); alternate linkage. A Glycyl lysine isopeptide (Lys-Gly) (interchain with G-Cter in SUMO2); alternate cross-link involves residue lysine 237. Over residues 237-250 the composition is skewed to basic and acidic residues; sequence KEEPQTVPEARSRD. Serine 248 carries the phosphoserine modification. Threonine 252 is subject to Phosphothreonine. Serine 256 is modified (phosphoserine). The tract at residues 265–292 is basic motif; that stretch reads RIKVERKRLRNRLAATKCRKRKLERIAR. Positions 265–328 constitute a bZIP domain; sequence RIKVERKRLR…AQLKQKVMTH (64 aa). The interval 293–321 is leucine-zipper; sequence LEDKVKTLKAENAGLSSAAGLLREQVAQL. Lysine 340 participates in a covalent cross-link: Glycyl lysine isopeptide (Lys-Gly) (interchain with G-Cter in SUMO2).

It belongs to the bZIP family. Jun subfamily. Binds DNA as a homodimer or as a heterodimer with another member of the Jun/Fos family. Component of an AP-1 transcription factor complex composed of JUN-FOS heterodimers. As part of the AP-1 transcription factor complex, forms heterodimers with FOSB, thereby binding to the AP-1 consensus sequence and stimulating transcription. Interacts with NFE2 (via its WW domains). Post-translationally, ubiquitinated by ITCH, leading to its degradation.

It is found in the nucleus. Transcription factor involved in regulating gene activity following the primary growth factor response. Binds to the DNA sequence 5'-TGA[GC]TCA-3'. Heterodimerizes with proteins of the FOS family to form an AP-1 transcription complex, thereby enhancing its DNA binding activity to an AP-1 consensus sequence 5'-TGA[GC]TCA-3' and enhancing its transcriptional activity. The chain is Transcription factor JunB (Junb) from Mus musculus (Mouse).